The sequence spans 430 residues: Serine--tRNA ligase (430 aa).

Residue 236 to 238 (TAE) participates in L-serine binding. 267–269 (RRE) lines the ATP pocket. L-serine is bound at residue E290. 354–357 (EISS) is an ATP binding site. S390 is a binding site for L-serine.

The protein belongs to the class-II aminoacyl-tRNA synthetase family. Type-1 seryl-tRNA synthetase subfamily. In terms of assembly, homodimer. The tRNA molecule binds across the dimer.

The protein resides in the cytoplasm. The catalysed reaction is tRNA(Ser) + L-serine + ATP = L-seryl-tRNA(Ser) + AMP + diphosphate + H(+). It catalyses the reaction tRNA(Sec) + L-serine + ATP = L-seryl-tRNA(Sec) + AMP + diphosphate + H(+). It functions in the pathway aminoacyl-tRNA biosynthesis; selenocysteinyl-tRNA(Sec) biosynthesis; L-seryl-tRNA(Sec) from L-serine and tRNA(Sec): step 1/1. Its function is as follows. Catalyzes the attachment of serine to tRNA(Ser). Is also able to aminoacylate tRNA(Sec) with serine, to form the misacylated tRNA L-seryl-tRNA(Sec), which will be further converted into selenocysteinyl-tRNA(Sec). This is Serine--tRNA ligase from Gloeothece citriformis (strain PCC 7424) (Cyanothece sp. (strain PCC 7424)).